The primary structure comprises 363 residues: 5-formaminoimidazole-4-carboxamide-1-(beta)-D-ribofuranosyl 5'-monophosphate synthetase (363 aa).

5-amino-1-(5-phospho-beta-D-ribosyl)imidazole-4-carboxamide contacts are provided by His29 and Ser96. The ATP-grasp domain occupies 118–350; it reads RDILRWESER…MGRRVAREIR (233 aa). Residues 148 to 210 and Glu232 contribute to the ATP site; that span reads PEEI…TNFC. Asn260 contacts 5-amino-1-(5-phospho-beta-D-ribosyl)imidazole-4-carboxamide. Mg(2+)-binding residues include Gln299 and Glu312.

It belongs to the phosphohexose mutase family. Mg(2+) serves as cofactor. Requires Mn(2+) as cofactor.

It carries out the reaction 5-amino-1-(5-phospho-beta-D-ribosyl)imidazole-4-carboxamide + formate + ATP = 5-formamido-1-(5-phospho-D-ribosyl)imidazole-4-carboxamide + ADP + phosphate. It participates in purine metabolism; IMP biosynthesis via de novo pathway; 5-formamido-1-(5-phospho-D-ribosyl)imidazole-4-carboxamide from 5-amino-1-(5-phospho-D-ribosyl)imidazole-4-carboxamide (formate route): step 1/1. Its function is as follows. Catalyzes the ATP- and formate-dependent formylation of 5-aminoimidazole-4-carboxamide-1-beta-d-ribofuranosyl 5'-monophosphate (AICAR) to 5-formaminoimidazole-4-carboxamide-1-beta-d-ribofuranosyl 5'-monophosphate (FAICAR) in the absence of folates. In Methanothermobacter thermautotrophicus (strain ATCC 29096 / DSM 1053 / JCM 10044 / NBRC 100330 / Delta H) (Methanobacterium thermoautotrophicum), this protein is 5-formaminoimidazole-4-carboxamide-1-(beta)-D-ribofuranosyl 5'-monophosphate synthetase.